Here is a 470-residue protein sequence, read N- to C-terminus: 5-hydroxytryptamine receptor 2A (470 aa).

Over 1 to 80 (MDVLCEENTS…LQEKNWSALL (80 aa)) the chain is Extracellular. 6 N-linked (GlcNAc...) asparagine glycosylation sites follow: N8, N38, N44, N51, N54, and N75. A helical membrane pass occupies residues 81–97 (TAVVIILTIAGNILVIM). At 98–111 (AVSLEKKLQNATNY) the chain is on the cytoplasmic side. A helical transmembrane segment spans residues 112–137 (FLMSLAIADMLLGFLVMPVSMLTILY). Residues 138 to 146 (GYRWPLPSK) lie on the Extracellular side of the membrane. A helical membrane pass occupies residues 147 to 171 (LCAVWIYLDVLFSTASIMHLCAISL). An intrachain disulfide couples C148 to C227. Residue D155 participates in serotonin binding. The short motif at 172–174 (DRY) is the DRY motif; important for ligand-induced conformation changes element. Topologically, residues 172–191 (DRYVAIQNPIHHRRFNSRTK) are cytoplasmic. The helical transmembrane segment at 192–215 (AFLKIIAVWTISVGISMPIPVFGL) threads the bilayer. Topologically, residues 216–232 (QDDSKVFKEGSCLLADD) are extracellular. A helical transmembrane segment spans residues 233 to 258 (NFVLIGSFVSFFIPLTIMVITYFLTI). The Cytoplasmic segment spans residues 259 to 321 (KSLQKEATLC…QSISNEQKAC (63 aa)). S280 bears the Phosphoserine mark. The helical transmembrane segment at 322–347 (KVLGIVFFLFVVMWCPFFITNIMAVI) threads the bilayer. N342 contributes to the serotonin binding site. Cysteines 348 and 352 form a disulfide. Topologically, residues 348–355 (CKESCNED) are extracellular. A helical transmembrane segment spans residues 356–381 (VIGALLNVFVWIGYLSSAVNPLVYTL). The NPxxY motif; important for ligand-induced conformation changes and signaling signature appears at 375–379 (NPLVY). Topologically, residues 382–470 (FNKTYRSAFS…NTVNEKVSCV (89 aa)) are cytoplasmic. Residues 448 to 470 (GKQHSEDAPADNSNTVNEKVSCV) are disordered. A compositionally biased stretch (polar residues) spans 458-470 (DNSNTVNEKVSCV). A PDZ-binding motif is present at residues 468 to 470 (SCV).

The protein belongs to the G-protein coupled receptor 1 family. In terms of assembly, interacts (via C-terminus) with MPDZ and PATJ. May interact (via C-terminus) with MPP3, PRDX6, DLG4, DLG1, CASK, APBA1 and MAGI2. Interacts with GRM2 and DRD2; this may affect signaling.

Its subcellular location is the cell membrane. The protein resides in the cell projection. The protein localises to the dendrite. It is found in the axon. It localises to the cytoplasmic vesicle. Its subcellular location is the membrane. The protein resides in the caveola. The protein localises to the presynapse. With respect to regulation, G-protein coupled receptor activity is regulated by lipids: oleamide increases HTR2A-mediated activity. Its function is as follows. G-protein coupled receptor for 5-hydroxytryptamine (serotonin). Also functions as a receptor for various drugs and psychoactive substances, including mescaline, psilocybin, 1-(2,5-dimethoxy-4-iodophenyl)-2-aminopropane (DOI) and lysergic acid diethylamide (LSD). Ligand binding causes a conformation change that triggers signaling via guanine nucleotide-binding proteins (G proteins) and modulates the activity of downstream effectors. HTR2A is coupled to G(q)/G(11) G alpha proteins and activates phospholipase C-beta, releasing diacylglycerol (DAG) and inositol 1,4,5-trisphosphate (IP3) second messengers that modulate the activity of phosphatidylinositol 3-kinase and promote the release of Ca(2+) ions from intracellular stores, respectively. Beta-arrestin family members inhibit signaling via G proteins and mediate activation of alternative signaling pathways. Affects neural activity, perception, cognition and mood. Plays a role in the regulation of behavior, including responses to anxiogenic situations and psychoactive substances. Plays a role in intestinal smooth muscle contraction, and may play a role in arterial vasoconstriction. The polypeptide is 5-hydroxytryptamine receptor 2A (HTR2A) (Sus scrofa (Pig)).